Here is a 115-residue protein sequence, read N- to C-terminus: Con-Ins G1c (115 aa).

Residues 1-24 (MTTSFYFLLMALGLLLYVCQSSFG) form the signal peptide. Residues 25–29 (NQHTR) constitute a propeptide that is removed on maturation. A 4-hydroxyproline; partial modification is found at Pro34. 3 disulfides stabilise this stretch: Cys38-Cys101, Cys50-Cys114, and Cys100-Cys105. 4-carboxyglutamate is present on Glu41. The propeptide at 53 to 94 (KRNDAGKKRGRASPLWQRRGSLSQLKARAKRNGAFHLPRDGR) is c peptide. Glu98 bears the 4-carboxyglutamate mark. Residue Pro104 is modified to 4-hydroxyproline; partial. A 4-carboxyglutamate; partial modification is found at Glu109.

It belongs to the insulin family. Heterodimer of A and B chains; disulfide-linked. Is different from Con-Ins G1a (AC A0A0B5AC95) due to absence of amidation at Cys-114. In terms of tissue distribution, expressed by the venom gland.

Its subcellular location is the secreted. In terms of biological role, this venom insulin, from a fish-hunting cone snail, facilitates prey capture by rapidly inducing hypoglycemic shock. It is one of the smallest known insulin found in nature and lacks the C-terminal segment of the B chain that, in human insulin, mediates engagement of the insulin receptor (INSR) and assembly of the hormone's hexameric storage form. Despite lacking this segment, it both binds and activates human insulin receptor (long isoform (HIR-B)) with only a 10-fold lower potency. In vivo, intraperitoneal injection of this peptide into zebrafish lowers blood glucose with the same potency than human insulin. In addition, when applied to water, this peptide reduces overall locomotor activity of zebrafish larvae, observed as a significant decrease in the percentage of time spent swimming and movement frequency. In Conus geographus (Geography cone), this protein is Con-Ins G1c.